We begin with the raw amino-acid sequence, 447 residues long: Alpha-1,3-mannosyl-glycoprotein 2-beta-N-acetylglucosaminyltransferase (447 aa).

Residues 1–6 (MLKKQS) lie on the Cytoplasmic side of the membrane. The helical; Signal-anchor for type II membrane protein transmembrane segment at 7 to 29 (AGLVLWGAILFVAWNALLLLFFW) threads the bilayer. Residues 30-447 (TRPVPSRLPS…TWDGYDPSWT (418 aa)) lie on the Lumenal side of the membrane. Cysteine 115 and cysteine 145 are joined by a disulfide. Arginine 117, aspartate 144, histidine 190, and aspartate 212 together coordinate substrate. Aspartate 213 serves as a coordination point for Mn(2+). A disulfide bridge links cysteine 239 with cysteine 305. Aspartate 291 acts as the Proton acceptor in catalysis. Substrate is bound at residue serine 322.

Belongs to the glycosyltransferase 13 family. Interacts with MGAT4D. Interacts with BRI3. Mn(2+) is required as a cofactor.

The protein localises to the golgi apparatus membrane. Its subcellular location is the cytoplasm. The protein resides in the perinuclear region. The enzyme catalyses N(4)-(alpha-D-Man-(1-&gt;3)-[alpha-D-Man-(1-&gt;3)-[alpha-D-Man-(1-&gt;6)]-alpha-D-Man-(1-&gt;6)]-beta-D-Man-(1-&gt;4)-beta-D-GlcNAc-(1-&gt;4)-beta-D-GlcNAc)-L-asparaginyl-[protein] (N-glucan mannose isomer 5A1,2) + UDP-N-acetyl-alpha-D-glucosamine = N(4)-{beta-D-GlcNAc-(1-&gt;2)-alpha-D-Man-(1-&gt;3)-[alpha-D-Man-(1-&gt;3)-[alpha-D-Man-(1-&gt;6)]-alpha-D-Man-(1-&gt;6)]-beta-D-Man-(1-&gt;4)-beta-D-GlcNAc-(1-&gt;4)-beta-D-GlcNAc}-L-asparaginyl-[protein] + UDP + H(+). It functions in the pathway protein modification; protein glycosylation. Its function is as follows. Initiates complex N-linked carbohydrate formation. Essential for the conversion of high-mannose to hybrid and complex N-glycans. The protein is Alpha-1,3-mannosyl-glycoprotein 2-beta-N-acetylglucosaminyltransferase (MGAT1) of Oryctolagus cuniculus (Rabbit).